We begin with the raw amino-acid sequence, 786 residues long: Toll-like receptor 1 (786 aa).

Residues 1–24 (MTSIFHFAIIFMLILQIRIQLSEE) form the signal peptide. Over 25–580 (SEFLVDRSKN…HMSELSCNIT (556 aa)) the chain is Extracellular. Asparagine 51 carries an N-linked (GlcNAc...) asparagine glycan. LRR repeat units lie at residues 54-77 (QNYI…LIIS), 78-101 (HNRI…LDLS), 102-125 (HNKL…SFNA), 126-150 (FDAL…STTH), 151-175 (LEKS…GETY), 176-199 (GEKE…FPTN), 200-223 (KEFH…NIKC), 224-250 (VLED…SNLT), 251-278 (LNNI…YFSI), 279-308 (SNVK…HQVV), 309-337 (SDVF…SGTR), 338-361 (MVHM…NLLT), 362-388 (DTVF…KELS), 389-414 (KIAE…SYDE), 415-437 (KKGD…ILTD), 438-457 (TIFR…SNKI), 458-478 (KSIP…VAFN), 479-500 (SLTD…IDHN), and 501-524 (SVSH…AGDN). Cysteine 110 and cysteine 132 are disulfide-bonded. 2 N-linked (GlcNAc...) asparagine glycosylation sites follow: asparagine 137 and asparagine 163. The cysteines at positions 223 and 230 are disulfide-linked. Residues 313-316 (GFPQ) form an interaction with bacterial lipopeptide region. Residue asparagine 330 is glycosylated (N-linked (GlcNAc...) asparagine). Cysteine 343 and cysteine 368 are disulfide-bonded. Cysteine 419 and cysteine 442 are disulfide-bonded. N-linked (GlcNAc...) asparagine glycosylation occurs at asparagine 429. The LRRCT domain maps to 525–579 (PFQCTCELGEFVKNIDQVSSEVLEGWPDSYKCDYPESYRGTLLKDFHMSELSCNI). An N-linked (GlcNAc...) asparagine glycan is attached at asparagine 578. A helical membrane pass occupies residues 581-601 (LLIVTIVATMLVLAVTVTSLC). At 602–786 (SYLDLPWYLR…NIKLTEQAKK (185 aa)) the chain is on the cytoplasmic side. The TIR domain maps to 635–776 (LQFHAFISYS…LFWANLRAAI (142 aa)).

It belongs to the Toll-like receptor family. In terms of assembly, interacts (via extracellular domain) with TLR2. TLR2 seems to exist in heterodimers with either TLR1 or TLR6 before stimulation by the ligand. The heterodimers form bigger oligomers in response to their corresponding ligands as well as further heterotypic associations with other receptors such as CD14 and/or CD36. The activation cluster TLR2:TLR1:CD14 forms in response to triacylated lipopeptides. Binds MYD88 (via TIR domain). Interacts with CNPY3. Interacts with neutrophil recruitment protein from Aedes aegypti saliva; the interaction probably promotes activation of canonical NF-kappa-B signaling in skin-resident macrophages and subsequent expression of neutrophil chemoattractants. As to expression, ubiquitous. Highly expressed in spleen, ovary, peripheral blood leukocytes, thymus and small intestine.

The protein resides in the cell membrane. It is found in the cytoplasmic vesicle. It localises to the phagosome membrane. Its subcellular location is the membrane raft. The protein localises to the golgi apparatus. Its function is as follows. Participates in the innate immune response to microbial agents. Specifically recognizes diacylated and triacylated lipopeptides. Cooperates with TLR2 to mediate the innate immune response to bacterial lipoproteins or lipopeptides. Forms the activation cluster TLR2:TLR1:CD14 in response to triacylated lipopeptides, this cluster triggers signaling from the cell surface and subsequently is targeted to the Golgi in a lipid-raft dependent pathway. Acts via MYD88 and TRAF6, leading to NF-kappa-B activation, cytokine secretion and the inflammatory response. In Homo sapiens (Human), this protein is Toll-like receptor 1 (TLR1).